Consider the following 347-residue polypeptide: 3-keto-steroid reductase ERG27 (347 aa).

Residues leucine 15, threonine 38, and arginine 44 each contribute to the NADP(+) site. Residues serine 179 and tyrosine 202 each act as proton donor in the active site. NADP(+)-binding residues include tyrosine 202, lysine 206, and serine 237. The Lowers pKa of active site Tyr role is filled by lysine 206. Phosphothreonine is present on threonine 345.

This sequence belongs to the short-chain dehydrogenases/reductases (SDR) family. ERG27 subfamily. Heterotetramer of ERG25, ERG26, ERG27 and ERG28. ERG28 acts as a scaffold to tether ERG27 and other 4,4-demethylation-related enzymes, forming a demethylation enzyme complex, in the endoplasmic reticulum. Interacts with ERG25 and ERG28. Also interacts with ERG7, but only in lipid particles.

It localises to the endoplasmic reticulum membrane. The protein resides in the lipid droplet. The catalysed reaction is 3-dehydro-4alpha-methylzymosterol + NADPH + H(+) = 4alpha-methylzymosterol + NADP(+). Its pathway is steroid biosynthesis; zymosterol biosynthesis; zymosterol from lanosterol: step 5/6. In terms of biological role, 3-keto-steroid reductase; part of the third module of ergosterol biosynthesis pathway that includes the late steps of the pathway. ERG27 is a catalytic component of the C-4 demethylation complex that catalyze the reduction of the keto group on the C-3. The third module or late pathway involves the ergosterol synthesis itself through consecutive reactions that mainly occur in the endoplasmic reticulum (ER) membrane. Firstly, the squalene synthase ERG9 catalyzes the condensation of 2 farnesyl pyrophosphate moieties to form squalene, which is the precursor of all steroids. Squalene synthase is crucial for balancing the incorporation of farnesyl diphosphate (FPP) into sterol and nonsterol isoprene synthesis. Secondly, the squalene epoxidase ERG1 catalyzes the stereospecific oxidation of squalene to (S)-2,3-epoxysqualene, which is considered to be a rate-limiting enzyme in steroid biosynthesis. Then, the lanosterol synthase ERG7 catalyzes the cyclization of (S)-2,3 oxidosqualene to lanosterol, a reaction that forms the sterol core. In the next steps, lanosterol is transformed to zymosterol through a complex process involving various demethylation, reduction and desaturation reactions. The lanosterol 14-alpha-demethylase ERG11 (also known as CYP51) catalyzes C14-demethylation of lanosterol to produce 4,4'-dimethyl cholesta-8,14,24-triene-3-beta-ol, which is critical for ergosterol biosynthesis. The C-14 reductase ERG24 reduces the C14=C15 double bond of 4,4-dimethyl-cholesta-8,14,24-trienol to produce 4,4-dimethyl-cholesta-8,24-dienol. 4,4-dimethyl-cholesta-8,24-dienol is substrate of the C-4 demethylation complex ERG25-ERG26-ERG27 in which ERG25 catalyzes the three-step monooxygenation required for the demethylation of 4,4-dimethyl and 4alpha-methylsterols, ERG26 catalyzes the oxidative decarboxylation that results in a reduction of the 3-beta-hydroxy group at the C-3 carbon to an oxo group, and ERG27 is responsible for the reduction of the keto group on the C-3. ERG28 has a role as a scaffold to help anchor ERG25, ERG26 and ERG27 to the endoplasmic reticulum and ERG29 regulates the activity of the iron-containing C4-methylsterol oxidase ERG25. Then, the sterol 24-C-methyltransferase ERG6 catalyzes the methyl transfer from S-adenosyl-methionine to the C-24 of zymosterol to form fecosterol. The C-8 sterol isomerase ERG2 catalyzes the reaction which results in unsaturation at C-7 in the B ring of sterols and thus converts fecosterol to episterol. The sterol-C5-desaturase ERG3 then catalyzes the introduction of a C-5 double bond in the B ring to produce 5-dehydroepisterol. The C-22 sterol desaturase ERG5 further converts 5-dehydroepisterol into ergosta-5,7,22,24(28)-tetraen-3beta-ol by forming the C-22(23) double bond in the sterol side chain. Finally, ergosta-5,7,22,24(28)-tetraen-3beta-ol is substrate of the C-24(28) sterol reductase ERG4 to produce ergosterol. Functionally, facilitates the association of ERG7 with lipid particles preventing its digestion in the endoplasmic reticulum and the lipid particles. In Saccharomyces cerevisiae (strain ATCC 204508 / S288c) (Baker's yeast), this protein is 3-keto-steroid reductase ERG27.